A 93-amino-acid chain; its full sequence is Large ribosomal subunit protein bL31 (93 aa).

The disordered stretch occupies residues 68 to 93 (GSADAAADEKKTDAKNNNKDNTSKED). Basic and acidic residues predominate over residues 74 to 93 (ADEKKTDAKNNNKDNTSKED).

The protein belongs to the bacterial ribosomal protein bL31 family. Type A subfamily. In terms of assembly, part of the 50S ribosomal subunit.

Binds the 23S rRNA. In Prochlorococcus marinus (strain MIT 9303), this protein is Large ribosomal subunit protein bL31.